The following is a 210-amino-acid chain: Mating-type-like protein A1 (210 aa).

The segment at residues 141–200 (SKKKRQRLDNSTKEFLEKVFEKNKQPNRRERELIAEKHGVSLSQIRVWFTNKRMRKKEPK) is a DNA-binding region (homeobox).

It belongs to the MATA1 family. In terms of assembly, forms a heterodimer with ALPHA2.

The protein localises to the nucleus. Mating type proteins are sequence specific DNA-binding proteins that act as master switches in yeast differentiation by controlling gene expression in a cell type-specific fashion. Transcriptional corepressor that acts in conjunction with ALPHA2 to repress transcription both of homozygote-specific genes and of genes necessary for the white-opaque switch, a prerequisite for mating. This chain is Mating-type-like protein A1 (MTLA1), found in Candida albicans (strain SC5314 / ATCC MYA-2876) (Yeast).